Consider the following 77-residue polypeptide: Small ribosomal subunit protein bS20 (77 aa).

It belongs to the bacterial ribosomal protein bS20 family.

Its function is as follows. Binds directly to 16S ribosomal RNA. This chain is Small ribosomal subunit protein bS20, found in Lactococcus lactis subsp. cremoris (strain MG1363).